The primary structure comprises 262 residues: Hydroxyethylthiazole kinase (262 aa).

M43 contacts substrate. The ATP site is built by R118 and T164. Substrate is bound at residue A191.

This sequence belongs to the Thz kinase family. The cofactor is Mg(2+).

It carries out the reaction 5-(2-hydroxyethyl)-4-methylthiazole + ATP = 4-methyl-5-(2-phosphooxyethyl)-thiazole + ADP + H(+). It functions in the pathway cofactor biosynthesis; thiamine diphosphate biosynthesis; 4-methyl-5-(2-phosphoethyl)-thiazole from 5-(2-hydroxyethyl)-4-methylthiazole: step 1/1. Its function is as follows. Catalyzes the phosphorylation of the hydroxyl group of 4-methyl-5-beta-hydroxyethylthiazole (THZ). The protein is Hydroxyethylthiazole kinase of Cereibacter sphaeroides (strain ATCC 17025 / ATH 2.4.3) (Rhodobacter sphaeroides).